Here is a 369-residue protein sequence, read N- to C-terminus: Glutamine synthetase 2 cytoplasmic (369 aa).

A GS beta-grasp domain is found at 32-112; it reads VQATYVWIDG…VMCDTYKFDG (81 aa). The GS catalytic domain occupies 119–369; the sequence is KRKTCLEVAN…AILRTICLDE (251 aa).

The protein belongs to the glutamine synthetase family. As to quaternary structure, homooctamer.

Its subcellular location is the cytoplasm. The enzyme catalyses L-glutamate + NH4(+) + ATP = L-glutamine + ADP + phosphate + H(+). The polypeptide is Glutamine synthetase 2 cytoplasmic (Gs2) (Drosophila melanogaster (Fruit fly)).